We begin with the raw amino-acid sequence, 610 residues long: UvrABC system protein C (610 aa).

The 79-residue stretch at 16–94 folds into the GIY-YIG domain; the sequence is SQPGVYRMYD…IKLYQPRYNV (79 aa). The UVR domain maps to 204–239; sequence DQVLTQLIARMEKASQDLAFEEAARIRDQIQAVRRV.

It belongs to the UvrC family. As to quaternary structure, interacts with UvrB in an incision complex.

Its subcellular location is the cytoplasm. Functionally, the UvrABC repair system catalyzes the recognition and processing of DNA lesions. UvrC both incises the 5' and 3' sides of the lesion. The N-terminal half is responsible for the 3' incision and the C-terminal half is responsible for the 5' incision. The chain is UvrABC system protein C from Salmonella typhi.